The sequence spans 389 residues: Probable serine/threonine-protein kinase PBL11 (389 aa).

Residue G2 is the site of N-myristoyl glycine attachment. C4 carries the S-palmitoyl cysteine lipid modification. A Protein kinase domain is found at 68 to 353; that stretch reads FRPDSVVGEG…NEIVKTMEEL (286 aa). Residues 74–82 and K106 contribute to the ATP site; that span reads VGEGGFGCV. A Phosphotyrosine modification is found at Y151. The Proton acceptor role is filled by D203. Residues S207 and S237 each carry the phosphoserine modification. Phosphothreonine occurs at positions 238 and 243. The residue at position 251 (Y251) is a Phosphotyrosine.

The protein belongs to the protein kinase superfamily. Ser/Thr protein kinase family. As to expression, roots, leaves and stems.

Its subcellular location is the cell membrane. The enzyme catalyses L-seryl-[protein] + ATP = O-phospho-L-seryl-[protein] + ADP + H(+). It carries out the reaction L-threonyl-[protein] + ATP = O-phospho-L-threonyl-[protein] + ADP + H(+). In terms of biological role, may play a role in the regulation of plant growth and development. May be involved in plant defense signaling. The chain is Probable serine/threonine-protein kinase PBL11 from Arabidopsis thaliana (Mouse-ear cress).